A 167-amino-acid chain; its full sequence is uncharacterized protein (167 aa).

A helical membrane pass occupies residues 39-59; it reads LSLFSLSPLFLLLSISSLIFS. A coiled-coil region spans residues 92-122; the sequence is LGTQIEMITQAMTTLESRVTDLQQESNDHRT. Residues 134-167 form a disordered region; sequence RDLGDENRPKPTTNKMIATGEQHKGEVSTSLFHD. The segment covering 154-167 has biased composition (basic and acidic residues); sequence EQHKGEVSTSLFHD.

It localises to the mitochondrion membrane. This is an uncharacterized protein from Arabidopsis thaliana (Mouse-ear cress).